The chain runs to 917 residues: Hexokinase HKDC1 (917 aa).

Residues 1–20 (MFAVHLMAFYFSKLKEDQIK) are mitochondrial-binding peptide (MBP). Hexokinase domains lie at 16-458 (EDQI…MVTA) and 464-905 (QAQR…LITA). Residues Arg30 and 84-89 (DLGGSK) contribute to the ATP site. The segment at 73–207 (DGSENGEFLS…DMDVDILALV (135 aa)) is hexokinase small subdomain 1. A D-glucose 6-phosphate-binding site is contributed by 84–91 (DLGGSKFR). Residues Ser155, 172–173 (TK), and 208–209 (ND) contribute to the D-glucose site. The hexokinase large subdomain 1 stretch occupies residues 208–447 (NDTVGTMMTC…CDVRFLLSES (240 aa)). D-glucose 6-phosphate is bound by residues Asp209 and Thr232. D-glucose-binding positions include Asn235, Glu260, and 291 to 294 (QLFE). 413 to 415 (DGT) lines the D-glucose 6-phosphate pocket. An ATP-binding site is contributed by 425-426 (KR). D-glucose 6-phosphate-binding positions include Ser449 and 532–536 (DLGGT). Residues 521 to 654 (DGTEKGKFLA…EFDLDIVAVV (134 aa)) are hexokinase small subdomain 2. Position 532–537 (532–537 (DLGGTN)) interacts with ATP. D-glucose-binding positions include 602 to 603 (SF), 619 to 620 (TK), and 655 to 656 (ND). The interval 655 to 894 (NDTVGTMMTC…CDVTFMLSED (240 aa)) is hexokinase large subdomain 2. Asp656 and Thr679 together coordinate D-glucose 6-phosphate. Thr679 provides a ligand contact to ATP. D-glucose is bound by residues 681 to 682 (SN), Glu707, and Glu741. ATP contacts are provided by residues 746–747 (GM), 783–787 (TKFLS), and 862–866 (TLYKL). D-glucose 6-phosphate contacts are provided by residues 860-862 (DGT) and Ser896.

This sequence belongs to the hexokinase family. In terms of tissue distribution, widely expressed. Highly expressed in the brush border, surface epithelium and the myenteric plexus of the small and large intestines; the acinar centrocytes and interlobular ducts of the pancreas; and the alveolar macrophages in the lungs (at protein level). Present at moderate level in the thyroid follicular epithelium (at protein level).

Its subcellular location is the cytoplasm. The protein localises to the mitochondrion membrane. It is found in the photoreceptor inner segment. The catalysed reaction is a D-hexose + ATP = a D-hexose 6-phosphate + ADP + H(+). It carries out the reaction D-glucose + ATP = D-glucose 6-phosphate + ADP + H(+). The protein operates within carbohydrate metabolism; hexose metabolism. It functions in the pathway carbohydrate degradation; glycolysis; D-glyceraldehyde 3-phosphate and glycerone phosphate from D-glucose: step 1/4. Catalyzes the phosphorylation of hexose to hexose 6-phosphate, although at very low level compared to other hexokinases. Has low glucose phosphorylating activity compared to other hexokinases. Involved in glucose homeostasis and hepatic lipid accumulation. Required to maintain whole-body glucose homeostasis during pregnancy; however additional evidences are required to confirm this role. This chain is Hexokinase HKDC1, found in Homo sapiens (Human).